A 372-amino-acid chain; its full sequence is Peptidyl-prolyl cis-trans isomerase D (372 aa).

The PPIase cyclophilin-type domain occupies 9–175 (FFDISIGGKP…KEVKIEDCGV (167 aa)). 3 TPR repeats span residues 220-253 (VEAV…LKQY), 271-304 (VSLF…DNTD), and 309-342 (AKAL…QPHD).

The protein belongs to the cyclophilin-type PPIase family. PPIase D subfamily.

The protein localises to the cytoplasm. The catalysed reaction is [protein]-peptidylproline (omega=180) = [protein]-peptidylproline (omega=0). Its function is as follows. PPIases accelerate the folding of proteins. It catalyzes the cis-trans isomerization of proline imidic peptide bonds in oligopeptides. This Kluyveromyces lactis (strain ATCC 8585 / CBS 2359 / DSM 70799 / NBRC 1267 / NRRL Y-1140 / WM37) (Yeast) protein is Peptidyl-prolyl cis-trans isomerase D (CPR6).